Reading from the N-terminus, the 505-residue chain is Protein disulfide-isomerase A3 (505 aa).

Residues 1–24 (MRFSCLALLPGVALLLASALLASA) form the signal peptide. In terms of domain architecture, Thioredoxin 1 spans 25-133 (SDVLELTDEN…IVSHLKKQAG (109 aa)). Residues C57 and C60 each act as nucleophile in the active site. An intrachain disulfide couples C57 to C60. The residue at position 61 (K61) is an N6-methyllysine. C85 and C92 form a disulfide bridge. At K129 the chain carries N6-succinyllysine. An N6-acetyllysine modification is found at K152. Residue K218 is modified to N6-succinyllysine. K252 is subject to N6-acetyllysine. Residue T319 is modified to Phosphothreonine. A Thioredoxin 2 domain is found at 343 to 485 (SRDGKALERF…FISYLQREAT (143 aa)). K362 bears the N6-acetyllysine mark. Residues C406 and C409 each act as nucleophile in the active site. A disulfide bridge connects residues C406 and C409. Residues 484 to 505 (ATNPPIIQEEKPKKKKKAQEDL) are disordered. Residues 491–505 (QEEKPKKKKKAQEDL) show a composition bias toward basic and acidic residues. K494 bears the N6-acetyllysine mark. The short motif at 502-505 (QEDL) is the Prevents secretion from ER element.

The protein belongs to the protein disulfide isomerase family. In terms of assembly, part of the major histocompatibility complex class I (MHC I) peptide loading complex composed of TAP1, TAP2, B2M, MHC heavy chain, TAPBP, PDIA3, and CALR. Interacts with ERP27 and CANX. Interacts with SERPINA2 and with SERPINA1. Interacts with ATP2A2. Post-translationally, within the major histocompatibility complex class I (MHC I) peptide loading complex forms reversible disulfide-linked heterodimers with TAPBP as part of its protein folding chaperone activity. This is essential to assist the dynamic assembly of the MHC I complex with high affinity antigens in the endoplasmic reticulum. Phosphorylated. In terms of tissue distribution, in caput epididymal spermatozoa, detected in the head, mid and principal pieces. In cauda epididymal spermatozoa detected only in the acrosome (at protein level).

The protein resides in the endoplasmic reticulum. It is found in the endoplasmic reticulum lumen. Its subcellular location is the melanosome. It catalyses the reaction Catalyzes the rearrangement of -S-S- bonds in proteins.. Its activity is regulated as follows. Seems to be inhibited by acidic phospholipids. In terms of biological role, protein disulfide isomerase that catalyzes the formation, isomerization, and reduction or oxidation of disulfide bonds in client proteins and functions as a protein folding chaperone. Core component of the major histocompatibility complex class I (MHC I) peptide loading complex where it functions as an essential folding chaperone for TAPBP. Through TAPBP, assists the dynamic assembly of the MHC I complex with high affinity antigens in the endoplasmic reticulum. Therefore, plays a crucial role in the presentation of antigens to cytotoxic T cells in adaptive immunity. This is Protein disulfide-isomerase A3 (Pdia3) from Rattus norvegicus (Rat).